Here is a 437-residue protein sequence, read N- to C-terminus: MTMSLIQACRSLALSTWLLSFCFVHLLCLDFTVAEKEEWYTAFVNITYLEPEPGAAVAGSGGGAELHTEKSECGRYGEHSPKQDARGEVVMASSAQDRLACDPNTKFAAPAHGKHWIALIPKGNCTYRDKIRNAFLQNASAVVIFNVGSNTNETITMPHAGVEDIVAIMIPEPKGKEIVSLLERNITVTMYITIGTRNLQKYVSRTSVVFVSISFIVLMIISLAWLVFYYIQRFRYANARDRNQRRLGDAAKKAISKLQVRTIRKGDKETESDFDNCAVCIEGYKPNDVVRILPCRHLFHKSCVDPWLLDHRTCPMCKMNILKALGIPPNADCMDDLPIDFEGSLGGPPTNQITGASDTTVNESSVTLDPAVRTVGALQVVQDPDPAPQEGEAIFTTNSGQEPALSSDSDISLIMALEVGLSDVELSTDQDCEEVKS.

A signal peptide spans 1 to 34 (MTMSLIQACRSLALSTWLLSFCFVHLLCLDFTVA). Topologically, residues 35-207 (EKEEWYTAFV…NLQKYVSRTS (173 aa)) are extracellular. N45, N124, N152, and N185 each carry an N-linked (GlcNAc...) asparagine glycan. Positions 80–182 (SPKQDARGEV…PKGKEIVSLL (103 aa)) constitute a PA domain. A helical transmembrane segment spans residues 208 to 228 (VVFVSISFIVLMIISLAWLVF). The Cytoplasmic portion of the chain corresponds to 229–437 (YYIQRFRYAN…TDQDCEEVKS (209 aa)). The segment at 277–318 (CAVCIEGYKPNDVVRILPCRHLFHKSCVDPWLLDHRTCPMCK) adopts an RING-type; atypical zinc-finger fold.

The protein localises to the membrane. The sequence is that of RING finger protein 150 (Rnf150) from Mus musculus (Mouse).